The chain runs to 279 residues: S-methyl-5'-thioadenosine phosphorylase (279 aa).

Phosphate is bound by residues serine 28, 70–71 (RH), and 103–104 (SA). Position 202 (methionine 202) interacts with substrate. Threonine 203 is a phosphate binding site. Residue 226–228 (DYD) coordinates substrate.

This sequence belongs to the PNP/MTAP phosphorylase family. MTAP subfamily. In terms of assembly, homohexamer. Dimer of a homotrimer.

The catalysed reaction is S-methyl-5'-thioadenosine + phosphate = 5-(methylsulfanyl)-alpha-D-ribose 1-phosphate + adenine. The protein operates within amino-acid biosynthesis; L-methionine biosynthesis via salvage pathway; S-methyl-5-thio-alpha-D-ribose 1-phosphate from S-methyl-5'-thioadenosine (phosphorylase route): step 1/1. Functionally, catalyzes the reversible phosphorylation of S-methyl-5'-thioadenosine (MTA) to adenine and 5-methylthioribose-1-phosphate. Involved in the breakdown of MTA, a major by-product of polyamine biosynthesis. Responsible for the first step in the methionine salvage pathway after MTA has been generated from S-adenosylmethionine. Has broad substrate specificity with 6-aminopurine nucleosides as preferred substrates. In Pyrobaculum aerophilum (strain ATCC 51768 / DSM 7523 / JCM 9630 / CIP 104966 / NBRC 100827 / IM2), this protein is S-methyl-5'-thioadenosine phosphorylase.